The primary structure comprises 273 residues: Shikimate dehydrogenase (NADP(+)) (273 aa).

Shikimate is bound by residues 15–17 (SKS) and T62. K66 acts as the Proton acceptor in catalysis. D78 provides a ligand contact to NADP(+). Residues N87 and D103 each coordinate shikimate. NADP(+) is bound by residues 127–131 (GAGGA), 150–155 (NRTHTR), A218, and G238.

This sequence belongs to the shikimate dehydrogenase family. Homodimer.

The enzyme catalyses shikimate + NADP(+) = 3-dehydroshikimate + NADPH + H(+). It functions in the pathway metabolic intermediate biosynthesis; chorismate biosynthesis; chorismate from D-erythrose 4-phosphate and phosphoenolpyruvate: step 4/7. Involved in the biosynthesis of the chorismate, which leads to the biosynthesis of aromatic amino acids. Catalyzes the reversible NADPH linked reduction of 3-dehydroshikimate (DHSA) to yield shikimate (SA). This Yersinia pseudotuberculosis serotype O:1b (strain IP 31758) protein is Shikimate dehydrogenase (NADP(+)).